A 369-amino-acid polypeptide reads, in one-letter code: uncharacterized protein (369 aa).

This sequence belongs to the myo-inositol 1-phosphate synthase family.

This is an uncharacterized protein from Mycobacterium leprae (strain TN).